A 427-amino-acid chain; its full sequence is UDP-N-acetylglucosamine 1-carboxyvinyltransferase (427 aa).

Position 22–23 (22–23) interacts with phosphoenolpyruvate; sequence KN. Residue R99 participates in UDP-N-acetyl-alpha-D-glucosamine binding. Residue C123 is the Proton donor of the active site. C123 bears the 2-(S-cysteinyl)pyruvic acid O-phosphothioketal mark. Residues 128 to 132, D313, and I335 contribute to the UDP-N-acetyl-alpha-D-glucosamine site; that span reads RPIDL.

The protein belongs to the EPSP synthase family. MurA subfamily.

It localises to the cytoplasm. It carries out the reaction phosphoenolpyruvate + UDP-N-acetyl-alpha-D-glucosamine = UDP-N-acetyl-3-O-(1-carboxyvinyl)-alpha-D-glucosamine + phosphate. The protein operates within cell wall biogenesis; peptidoglycan biosynthesis. In terms of biological role, cell wall formation. Adds enolpyruvyl to UDP-N-acetylglucosamine. The protein is UDP-N-acetylglucosamine 1-carboxyvinyltransferase of Novosphingobium aromaticivorans (strain ATCC 700278 / DSM 12444 / CCUG 56034 / CIP 105152 / NBRC 16084 / F199).